The primary structure comprises 89 residues: Elongation factor 1-beta (89 aa).

This sequence belongs to the EF-1-beta/EF-1-delta family.

Promotes the exchange of GDP for GTP in EF-1-alpha/GDP, thus allowing the regeneration of EF-1-alpha/GTP that could then be used to form the ternary complex EF-1-alpha/GTP/AAtRNA. In Methanococcus maripaludis (strain C6 / ATCC BAA-1332), this protein is Elongation factor 1-beta.